We begin with the raw amino-acid sequence, 487 residues long: Variant surface glycoprotein WRATAT B (487 aa).

A signal peptide spans 1-19 (MWIILALLTLAGSRVAHGA). 4 N-linked (GlcNAc...) asparagine glycosylation sites follow: asparagine 71, asparagine 84, asparagine 418, and asparagine 465. Residues 443–468 (KPKAGTEAATTGPGERDAGATANTTG) are disordered. A lipid anchor (GPI-anchor amidated serine) is attached at serine 470. The propeptide at 471-487 (NSFVIKTSPLLFAFLLF) is removed in mature form.

The protein resides in the cell membrane. Its function is as follows. VSG forms a coat on the surface of the parasite. The trypanosome evades the immune response of the host by expressing a series of antigenically distinct VSGs from an estimated 1000 VSG genes. The protein is Variant surface glycoprotein WRATAT B of Trypanosoma brucei rhodesiense.